We begin with the raw amino-acid sequence, 393 residues long: MMTKEAPLIALVAGEISGDILGAGLINALKLHYPNARFIGVAGPRMIQAGCETLFDMEELAVMGLAEVVKYLPRLLKRRKQVIETMLAEKPDIFIGIDAPDFNLTVEEKLKASGIKAIHYVSPSVWAWRQNRVQKIARATNLVLAFLPFEKAFYDRFNVPCRFIGHTMADAIALKPNRSEACATLNLDETQRYLAILVGSRASEVRFLAEPFLKAAQILKQQYPDLQFLVPLVNDKRIAQFEQIKAQVAPELSVHILKGNARQAMIAAEASLLASGTAALEGMLCKSPMVVGYKMKAMTYWLAKRLVKTKYISLPNLLADEMLVPELIQDECNPENLAWYLGNYLADDADHRKQRNELKQRFTELHKLIQCDADAQAAQAVVDVLEANTSDQN.

Belongs to the LpxB family.

The catalysed reaction is a lipid X + a UDP-2-N,3-O-bis[(3R)-3-hydroxyacyl]-alpha-D-glucosamine = a lipid A disaccharide + UDP + H(+). It participates in bacterial outer membrane biogenesis; LPS lipid A biosynthesis. In terms of biological role, condensation of UDP-2,3-diacylglucosamine and 2,3-diacylglucosamine-1-phosphate to form lipid A disaccharide, a precursor of lipid A, a phosphorylated glycolipid that anchors the lipopolysaccharide to the outer membrane of the cell. This is Lipid-A-disaccharide synthase from Actinobacillus pleuropneumoniae serotype 3 (strain JL03).